A 480-amino-acid chain; its full sequence is Ribosomal protein uS12 methylthiotransferase RimO (480 aa).

One can recognise an MTTase N-terminal domain in the interval 14 to 135 (LSVAMVTLGC…IAARLRSIVA (122 aa)). [4Fe-4S] cluster contacts are provided by C23, C59, C98, C193, C197, and C200. The region spanning 179-410 (LDDGPTAALK…DLVEELTSQR (232 aa)) is the Radical SAM core domain. The TRAM domain occupies 412-480 (AERLGEQVEV…EGADLDARPL (69 aa)).

This sequence belongs to the methylthiotransferase family. RimO subfamily. It depends on [4Fe-4S] cluster as a cofactor.

It is found in the cytoplasm. It carries out the reaction L-aspartate(89)-[ribosomal protein uS12]-hydrogen + (sulfur carrier)-SH + AH2 + 2 S-adenosyl-L-methionine = 3-methylsulfanyl-L-aspartate(89)-[ribosomal protein uS12]-hydrogen + (sulfur carrier)-H + 5'-deoxyadenosine + L-methionine + A + S-adenosyl-L-homocysteine + 2 H(+). Functionally, catalyzes the methylthiolation of an aspartic acid residue of ribosomal protein uS12. The sequence is that of Ribosomal protein uS12 methylthiotransferase RimO from Nocardioides sp. (strain ATCC BAA-499 / JS614).